The following is a 63-amino-acid chain: 2-hydroxymuconate tautomerase (63 aa).

Residue P2 is the Proton acceptor; via imino nitrogen of the active site.

It belongs to the 4-oxalocrotonate tautomerase family. Homohexamer.

The enzyme catalyses (2Z,4E)-2-hydroxyhexa-2,4-dienedioate = (3E)-2-oxohex-3-enedioate. Its pathway is aromatic compound metabolism; salicylate degradation. Its function is as follows. Catalyzes the ketonization of 2-hydroxymuconate stereoselectively to yield 2-oxo-3-hexenedioate. This is 2-hydroxymuconate tautomerase (nahJ) from Pseudomonas fluorescens.